A 312-amino-acid chain; its full sequence is Ribosomal RNA small subunit methyltransferase H (312 aa).

Residues 35–37 (GGH), D55, D101, and Q108 each bind S-adenosyl-L-methionine. The interval 285–306 (ALKPSEHEVTENSRSRSSVLRV) is disordered. Basic and acidic residues predominate over residues 287–298 (KPSEHEVTENSR).

It belongs to the methyltransferase superfamily. RsmH family.

It is found in the cytoplasm. The enzyme catalyses cytidine(1402) in 16S rRNA + S-adenosyl-L-methionine = N(4)-methylcytidine(1402) in 16S rRNA + S-adenosyl-L-homocysteine + H(+). Specifically methylates the N4 position of cytidine in position 1402 (C1402) of 16S rRNA. In Aeromonas salmonicida (strain A449), this protein is Ribosomal RNA small subunit methyltransferase H.